The sequence spans 447 residues: Adenylosuccinate synthetase (447 aa).

GTP is bound by residues 12–18 (GDEGKGK) and 40–42 (GHT). The active-site Proton acceptor is the Asp13. Residues Asp13 and Gly40 each contribute to the Mg(2+) site. Residues 13–16 (DEGK), 38–41 (NAGH), Thr128, Arg142, Gln223, Thr238, and Arg302 each bind IMP. His41 (proton donor) is an active-site residue. Substrate is bound at residue 298-304 (TTTGRRR). GTP-binding positions include Arg304, 330–332 (KLD), and 412–414 (SLG).

This sequence belongs to the adenylosuccinate synthetase family. In terms of assembly, homodimer. The cofactor is Mg(2+).

The protein localises to the cytoplasm. It catalyses the reaction IMP + L-aspartate + GTP = N(6)-(1,2-dicarboxyethyl)-AMP + GDP + phosphate + 2 H(+). The protein operates within purine metabolism; AMP biosynthesis via de novo pathway; AMP from IMP: step 1/2. In terms of biological role, plays an important role in the de novo pathway of purine nucleotide biosynthesis. Catalyzes the first committed step in the biosynthesis of AMP from IMP. The protein is Adenylosuccinate synthetase of Thermosynechococcus vestitus (strain NIES-2133 / IAM M-273 / BP-1).